Here is a 407-residue protein sequence, read N- to C-terminus: MKDIYDVLVIGAGPAGSIAAKTAAEKGLDVLLIEKRQEIGDPVRCAEGVNKEYLKKHVEIDNSWICADLKGSRIYSPNGTKVEMAEEISGGEVGYVLERKIFDRALAEHAAKAGAEVRVKTRATGLIIEDDFVKGARLMNLGKEYEVRAKIVIGADGVESKVGRWAGIDTSLKPIDIETCAQYLIAGADIDPEYCEFYIGNEIAPGGYVWIFPKGEGKANVGVGILGNRTGKFKPRPVDYLNNFVEKKFPNAKIVEMVFGGVPVSGSIEKTSVNGLMLVGDAARQSDPITGGGILNAMDAGKIAGEAAYEAISSGDVSLEKLEEVYEKRWRETTGHDIDMSLIVKNCFINLKDEDLDSLADSLKEVKFESMRLFDLLQALFKANKKLLWDLRVLFKDAAKEVMKNRT.

Residues A15, E34, C45, A46, G48, R99, A123, D281, G293, and I294 each coordinate FAD.

This sequence belongs to the geranylgeranyl reductase family. DGGGPL reductase subfamily. FAD serves as cofactor.

It carries out the reaction a 2,3-bis-O-phytanyl-sn-glycerol 1-phospholipid + 8 oxidized 2[4Fe-4S]-[ferredoxin] = a 2,3-bis-O-(geranylgeranyl)-sn-glycerol 1-phospholipid + 8 reduced 2[4Fe-4S]-[ferredoxin] + 16 H(+). It catalyses the reaction 2,3-bis-O-(phytanyl)-sn-glycerol 1-phosphate + 8 oxidized 2[4Fe-4S]-[ferredoxin] = 2,3-bis-O-(geranylgeranyl)-sn-glycerol 1-phosphate + 8 reduced 2[4Fe-4S]-[ferredoxin] + 16 H(+). The catalysed reaction is a 2,3-bis-O-phytanyl-sn-glycerol 1-phospholipid + 8 A = a 2,3-bis-O-(geranylgeranyl)-sn-glycerol 1-phospholipid + 8 AH2. The enzyme catalyses CDP-2,3-bis-O-(geranylgeranyl)-sn-glycerol + 8 AH2 = CDP-2,3-bis-O-(phytanyl)-sn-glycerol + 8 A. It carries out the reaction archaetidylserine + 8 AH2 = 2,3-bis-O-phytanyl-sn-glycero-3-phospho-L-serine + 8 A. It functions in the pathway membrane lipid metabolism; glycerophospholipid metabolism. Functionally, is involved in the reduction of 2,3-digeranylgeranylglycerophospholipids (unsaturated archaeols) into 2,3-diphytanylglycerophospholipids (saturated archaeols) in the biosynthesis of archaeal membrane lipids. Catalyzes the formation of archaetidic acid (2,3-di-O-phytanyl-sn-glyceryl phosphate) from 2,3-di-O-geranylgeranylglyceryl phosphate (DGGGP) via the hydrogenation of each double bond of the isoprenoid chains. Requires the adjacently encoded ferredoxin MA_1485 as the electron donor. Is also probably able to reduce double bonds of geranyl groups in CDP-2,3-bis-O-(geranylgeranyl)-sn-glycerol and archaetidylserine, thus acting at various stages in the biosynthesis of archaeal membrane lipids. This is Digeranylgeranylglycerophospholipid reductase from Methanosarcina acetivorans (strain ATCC 35395 / DSM 2834 / JCM 12185 / C2A).